A 248-amino-acid chain; its full sequence is Probable transcriptional regulatory protein Pcar_2335 (248 aa).

This sequence belongs to the TACO1 family.

The protein resides in the cytoplasm. The protein is Probable transcriptional regulatory protein Pcar_2335 of Syntrophotalea carbinolica (strain DSM 2380 / NBRC 103641 / GraBd1) (Pelobacter carbinolicus).